The following is a 138-amino-acid chain: MSDTLLAFDFGTKSIGVAIGQRITGTARPLPAIKAQDGTPDWMLIERLLKEWQPDEIIVGLPLNMDGTEQPLTARARKFANRIHGRFGVTVTLHDERLSTVEARSGLFERGGYRALNKGKVDSASAVIILESYFEQGY.

The protein belongs to the YqgF nuclease family.

Its subcellular location is the cytoplasm. Its function is as follows. Could be a nuclease involved in processing of the 5'-end of pre-16S rRNA. This is Putative pre-16S rRNA nuclease from Salmonella dublin (strain CT_02021853).